The sequence spans 274 residues: Proteasome subunit beta (274 aa).

A propeptide spans 1 to 52 (MADPLGAAGRLPAVFMTPGTSSFADFLSRSAPHLLPGARSGLPGPVTEVAHG) (removed in mature form; by autocatalysis). The active-site Nucleophile is the threonine 53.

It belongs to the peptidase T1B family. In terms of assembly, the 20S proteasome core is composed of 14 alpha and 14 beta subunits that assemble into four stacked heptameric rings, resulting in a barrel-shaped structure. The two inner rings, each composed of seven catalytic beta subunits, are sandwiched by two outer rings, each composed of seven alpha subunits. The catalytic chamber with the active sites is on the inside of the barrel. Has a gated structure, the ends of the cylinder being occluded by the N-termini of the alpha-subunits. Is capped by the proteasome-associated ATPase, ARC.

Its subcellular location is the cytoplasm. The enzyme catalyses Cleavage of peptide bonds with very broad specificity.. Its pathway is protein degradation; proteasomal Pup-dependent pathway. The formation of the proteasomal ATPase ARC-20S proteasome complex, likely via the docking of the C-termini of ARC into the intersubunit pockets in the alpha-rings, may trigger opening of the gate for substrate entry. Interconversion between the open-gate and close-gate conformations leads to a dynamic regulation of the 20S proteasome proteolysis activity. Component of the proteasome core, a large protease complex with broad specificity involved in protein degradation. This is Proteasome subunit beta from Frankia casuarinae (strain DSM 45818 / CECT 9043 / HFP020203 / CcI3).